Here is a 34-residue protein sequence, read N- to C-terminus: Brevinin-2Ec (34 aa).

Cys-28 and Cys-34 are disulfide-bonded.

It belongs to the frog skin active peptide (FSAP) family. Brevinin subfamily. In terms of tissue distribution, expressed by the skin glands.

The protein localises to the secreted. In terms of biological role, shows antibacterial activity against representative Gram-negative and Gram-positive bacterial species, and hemolytic activity. This is Brevinin-2Ec from Pelophylax lessonae (Pool frog).